A 737-amino-acid polypeptide reads, in one-letter code: Polyribonucleotide nucleotidyltransferase (737 aa).

Mg(2+) is bound by residues Asp489 and Asp495. The KH domain occupies 556–615 (PKIDTIKIDVDKIKIVIGKGGETIDKIIAETGVKIDIDEEGNVSIYSSDQDAINRAKEII). Residues 625 to 693 (DEVYRAKVVR…EKGRIDASMK (69 aa)) enclose the S1 motif domain. Residues 691-737 (SMKALLPRPPKPEHDEKGEKSERPHRPRHHKDHKPKKEFTETPKDSE) are disordered. The span at 700–714 (PKPEHDEKGEKSERP) shows a compositional bias: basic and acidic residues. Residues 715 to 724 (HRPRHHKDHK) show a composition bias toward basic residues. Residues 725-737 (PKKEFTETPKDSE) show a composition bias toward basic and acidic residues.

Belongs to the polyribonucleotide nucleotidyltransferase family. It depends on Mg(2+) as a cofactor.

The protein resides in the cytoplasm. The enzyme catalyses RNA(n+1) + phosphate = RNA(n) + a ribonucleoside 5'-diphosphate. Involved in mRNA degradation. Catalyzes the phosphorolysis of single-stranded polyribonucleotides processively in the 3'- to 5'-direction. In Streptococcus pneumoniae (strain ATCC 700669 / Spain 23F-1), this protein is Polyribonucleotide nucleotidyltransferase.